Reading from the N-terminus, the 526-residue chain is Phenylacetaldehyde oxime monooxygenase CYP71AN24 (526 aa).

Residues 22–42 (SFNIFLVPILCLSIFILFSLT) traverse the membrane as a helical segment. A heme-binding site is contributed by Cys-465.

The protein belongs to the cytochrome P450 family. Heme is required as a cofactor. Expressed in seedlings and leaves.

The protein resides in the membrane. The enzyme catalyses (E)-phenylacetaldehyde oxime + reduced [NADPH--hemoprotein reductase] + O2 = (R)-mandelonitrile + oxidized [NADPH--hemoprotein reductase] + 2 H2O + H(+). The catalysed reaction is phenylacetonitrile + reduced [NADPH--hemoprotein reductase] + O2 = (R)-mandelonitrile + oxidized [NADPH--hemoprotein reductase] + H2O + H(+). Functionally, involved in L-phenylalanine-derived cyanogenic glycoside biosynthesis, including prunasin and amygdalin defensive agents. Catalyzes the conversion of phenylacetaldoxime (PAOx) and phenylacetonitrile (PAN) into mandelonitrile (MAN). To a lower extent, can convert various aromatic aldoximes and nitriles; mediates the transformation of 4-hydroxyphenylacetaldoxime, 4-hydroxyphenylacetonitrile, indole-3-acetal-doxime and indole-3-acetonitrile into the corresponding hydroxynitriles, but cannot use the aliphatic compounds 2-methylpropanaloxime and 2-methylpropanenitrile as substrates. The sequence is that of Phenylacetaldehyde oxime monooxygenase CYP71AN24 from Prunus mume (Japanese apricot).